A 321-amino-acid polypeptide reads, in one-letter code: 4-hydroxy-3-methylbut-2-enyl diphosphate reductase (321 aa).

Cysteine 13 serves as a coordination point for [4Fe-4S] cluster. Residues histidine 41 and histidine 75 each coordinate (2E)-4-hydroxy-3-methylbut-2-enyl diphosphate. Dimethylallyl diphosphate contacts are provided by histidine 41 and histidine 75. Positions 41 and 75 each coordinate isopentenyl diphosphate. Cysteine 97 is a [4Fe-4S] cluster binding site. (2E)-4-hydroxy-3-methylbut-2-enyl diphosphate is bound at residue histidine 125. A dimethylallyl diphosphate-binding site is contributed by histidine 125. Residue histidine 125 participates in isopentenyl diphosphate binding. The active-site Proton donor is the glutamate 127. Threonine 168 serves as a coordination point for (2E)-4-hydroxy-3-methylbut-2-enyl diphosphate. Cysteine 225 contacts [4Fe-4S] cluster. Positions 253, 254, 255, and 302 each coordinate (2E)-4-hydroxy-3-methylbut-2-enyl diphosphate. Dimethylallyl diphosphate is bound by residues serine 253, serine 254, asparagine 255, and serine 302. Isopentenyl diphosphate-binding residues include serine 253, serine 254, asparagine 255, and serine 302.

This sequence belongs to the IspH family. [4Fe-4S] cluster is required as a cofactor.

It catalyses the reaction isopentenyl diphosphate + 2 oxidized [2Fe-2S]-[ferredoxin] + H2O = (2E)-4-hydroxy-3-methylbut-2-enyl diphosphate + 2 reduced [2Fe-2S]-[ferredoxin] + 2 H(+). The catalysed reaction is dimethylallyl diphosphate + 2 oxidized [2Fe-2S]-[ferredoxin] + H2O = (2E)-4-hydroxy-3-methylbut-2-enyl diphosphate + 2 reduced [2Fe-2S]-[ferredoxin] + 2 H(+). It participates in isoprenoid biosynthesis; dimethylallyl diphosphate biosynthesis; dimethylallyl diphosphate from (2E)-4-hydroxy-3-methylbutenyl diphosphate: step 1/1. It functions in the pathway isoprenoid biosynthesis; isopentenyl diphosphate biosynthesis via DXP pathway; isopentenyl diphosphate from 1-deoxy-D-xylulose 5-phosphate: step 6/6. Its function is as follows. Catalyzes the conversion of 1-hydroxy-2-methyl-2-(E)-butenyl 4-diphosphate (HMBPP) into a mixture of isopentenyl diphosphate (IPP) and dimethylallyl diphosphate (DMAPP). Acts in the terminal step of the DOXP/MEP pathway for isoprenoid precursor biosynthesis. This Pelodictyon phaeoclathratiforme (strain DSM 5477 / BU-1) protein is 4-hydroxy-3-methylbut-2-enyl diphosphate reductase.